The following is a 283-amino-acid chain: Elongation factor Ts (283 aa).

Positions 80 to 83 (TDFV) are involved in Mg(2+) ion dislocation from EF-Tu.

This sequence belongs to the EF-Ts family.

The protein resides in the cytoplasm. Associates with the EF-Tu.GDP complex and induces the exchange of GDP to GTP. It remains bound to the aminoacyl-tRNA.EF-Tu.GTP complex up to the GTP hydrolysis stage on the ribosome. The protein is Elongation factor Ts of Histophilus somni (strain 129Pt) (Haemophilus somnus).